We begin with the raw amino-acid sequence, 53 residues long: Conotoxin-like peptide 1 (53 aa).

Residues 1-18 (MGVKSALFIMAVFAAANV) form the signal peptide. 3 cysteine pairs are disulfide-bonded: Cys-25–Cys-39, Cys-32–Cys-43, and Cys-38–Cys-50.

Its subcellular location is the secreted. This Orgyia pseudotsugata multicapsid polyhedrosis virus (OpMNPV) protein is Conotoxin-like peptide 1 (CTL-1).